The primary structure comprises 409 residues: 2,3-bisphosphoglycerate-independent phosphoglycerate mutase (409 aa).

A disordered region spans residues 160-179 (ITDADPKHEGNKPKTVKPLD).

It belongs to the BPG-independent phosphoglycerate mutase family. A-PGAM subfamily.

The catalysed reaction is (2R)-2-phosphoglycerate = (2R)-3-phosphoglycerate. Its pathway is carbohydrate degradation; glycolysis; pyruvate from D-glyceraldehyde 3-phosphate: step 3/5. Functionally, catalyzes the interconversion of 2-phosphoglycerate and 3-phosphoglycerate. This chain is 2,3-bisphosphoglycerate-independent phosphoglycerate mutase, found in Methanosphaera stadtmanae (strain ATCC 43021 / DSM 3091 / JCM 11832 / MCB-3).